Consider the following 617-residue polypeptide: Neurosecretory protein VGF (617 aa).

The first 23 residues, 1-23 (MKTFTLPASVLFCFLLLIRGLGA), serve as a signal peptide directing secretion. Disordered stretches follow at residues 29–75 (SDVY…GELF), 94–113 (PASPPAVPAGSQQGTPEEAA), 121–157 (VRSQTHSLPASEIQASAVAPPRPQTQDNDPEADDRSE), and 169–192 (LRDFSPSNAKRQQETAAAETETRT). Residues 48 to 64 (AVSRPKDDSVPEVRAAR) are compositionally biased toward basic and acidic residues. The span at 148 to 157 (NDPEADDRSE) shows a compositional bias: acidic residues. Position 180 is a pyrrolidone carboxylic acid (Gln180). Residues 182–192 (ETAAAETETRT) are compositionally biased toward low complexity. Gln313 is subject to Pyrrolidone carboxylic acid. Positions 348–603 (DLGGRGLQET…AEERRLQEQE (256 aa)) are disordered. Acidic residues predominate over residues 378-397 (EDEVGEEDEEAAEAEAEAEE). Residues 418–436 (AEDKRSQEEAPGHRRKDAE) are compositionally biased toward basic and acidic residues. Ser423 carries the post-translational modification Phosphoserine. Acidic residues predominate over residues 437–452 (GTEEGGEEDDDDEEMD). Over residues 491-501 (PPEPVPPPRAA) the composition is skewed to pro residues. Residues 577–601 (HHPDLEAQARRAQEEADAEERRLQE) show a composition bias toward basic and acidic residues.

As to quaternary structure, interacts with HSPA8 on cell membrane. Interacts with C3AR1. Interacts with C1QBP. Multiple peptides are derived from VGF, with activities in synaptic plasticity, antidepression, penile erection, autonomic activation, and increases in energy expenditure. In terms of tissue distribution, central and peripheral nervous systems, synthesized exclusively in neuronal and neuroendocrine cells. VGF and several of the derived peptides are present in the brain.

It localises to the secreted. Its subcellular location is the cytoplasmic vesicle. The protein localises to the secretory vesicle. In terms of biological role, secreted polyprotein that is packaged and proteolytically processed by prohormone convertases PCSK1 and PCSK2 in a cell-type-specific manner. VGF and peptides derived from its processing play many roles in neurogenesis and neuroplasticity associated with learning, memory, depression and chronic pain. Its function is as follows. Plays a role in the control of body fluid homeostasis by regulating vasopressin release. Suppresses presynaptic glutamatergic neurons connected to vasopressin neurons. Functionally, plays a role in the control of body fluid homeostasis by regulating vasopressin release. Activates GABAergic interneurons which are inhibitory neurons of the nervous system and thereby suppresses presynaptic glutamatergic neurons. Also stimulates feeding behavior in an orexin-dependent manner in the hypothalamus. Functions as a positive regulator for the activation of orexin neurons resulting in elevated gastric acid secretion and gastric emptying. Secreted multifunctional neuropeptide that binds to different cell receptors and thereby plays multiple physiological roles including modulation of energy expenditure, pain, response to stress, gastric regulation, glucose homeostasis as well as lipolysis. Activates the G-protein-coupled receptor C3AR1 via a folding-upon-binding mechanism leading to enhanced lipolysis in adipocytes. Interacts with C1QBP receptor in macrophages and microglia causing increased levels of intracellular calcium and hypersensitivity. In terms of biological role, plays a role in the regulation of memory formation and depression-related behaviors potentially by influencing synaptic plasticity and neurogenesis. Induces acute and transient activation of the NTRK2/TRKB receptor and subsequent CREB phosphorylation. Also induces insulin secretion in insulinoma cells by increasing intracellular calcium mobilization. The polypeptide is Neurosecretory protein VGF (Vgf) (Rattus norvegicus (Rat)).